We begin with the raw amino-acid sequence, 118 residues long: Large ribosomal subunit protein bL20 (118 aa).

Belongs to the bacterial ribosomal protein bL20 family.

Binds directly to 23S ribosomal RNA and is necessary for the in vitro assembly process of the 50S ribosomal subunit. It is not involved in the protein synthesizing functions of that subunit. In Staphylococcus saprophyticus subsp. saprophyticus (strain ATCC 15305 / DSM 20229 / NCIMB 8711 / NCTC 7292 / S-41), this protein is Large ribosomal subunit protein bL20.